The sequence spans 399 residues: Cyclic dehypoxanthine futalosine synthase (399 aa).

A Radical SAM core domain is found at 56–288 (ATYIIERNIN…IAIARVFLDN (233 aa)). [4Fe-4S] cluster is bound by residues Cys-70, Cys-74, and Cys-77.

The protein belongs to the radical SAM superfamily. MqnC family. [4Fe-4S] cluster is required as a cofactor.

It carries out the reaction dehypoxanthine futalosine + S-adenosyl-L-methionine = cyclic dehypoxanthinylfutalosinate + 5'-deoxyadenosine + L-methionine + H(+). The protein operates within quinol/quinone metabolism; menaquinone biosynthesis. In terms of biological role, radical SAM enzyme that catalyzes the cyclization of dehypoxanthine futalosine (DHFL) into cyclic dehypoxanthine futalosine (CDHFL), a step in the biosynthesis of menaquinone (MK, vitamin K2). The polypeptide is Cyclic dehypoxanthine futalosine synthase (Streptomyces coelicolor (strain ATCC BAA-471 / A3(2) / M145)).